We begin with the raw amino-acid sequence, 124 residues long: Small ribosomal subunit protein uS12 (124 aa).

At Asp-89 the chain carries 3-methylthioaspartic acid. Residues 103-124 are disordered; it reads DTAGVKDRRQSRSKYGAKSPKE.

Belongs to the universal ribosomal protein uS12 family. Part of the 30S ribosomal subunit. Contacts proteins S8 and S17. May interact with IF1 in the 30S initiation complex.

Functionally, with S4 and S5 plays an important role in translational accuracy. Its function is as follows. Interacts with and stabilizes bases of the 16S rRNA that are involved in tRNA selection in the A site and with the mRNA backbone. Located at the interface of the 30S and 50S subunits, it traverses the body of the 30S subunit contacting proteins on the other side and probably holding the rRNA structure together. The combined cluster of proteins S8, S12 and S17 appears to hold together the shoulder and platform of the 30S subunit. In Prochlorococcus marinus (strain NATL2A), this protein is Small ribosomal subunit protein uS12.